A 289-amino-acid polypeptide reads, in one-letter code: Splicing factor C9orf78 homolog (289 aa).

Disordered stretches follow at residues 1–30 and 85–111; these read MRITGKTFRRRRADSESEEDEQESEEVRLK and RGKDKVSEEEDLHLGTSFSAETNRRDE. The interval 5-58 is interaction with SNRNP200; that stretch reads GKTFRRRRADSESEEDEQESEEVRLKLEETREVQNLRKRPNGVSAAALLVGEKV. Phosphoserine is present on residues Ser15 and Ser17. Tyr147 is modified (phosphotyrosine). Positions 232 to 283 are enriched in basic and acidic residues; sequence LNAPIRRNKEEPKARPLRVGDTEKPEPERSPPNRKRPANEKATDDYHYEKFK. Residues 232–289 are disordered; the sequence is LNAPIRRNKEEPKARPLRVGDTEKPEPERSPPNRKRPANEKATDDYHYEKFKKMNRRY. Thr253 bears the Phosphothreonine mark. Ser261 carries the post-translational modification Phosphoserine.

This sequence belongs to the TLS1 family. In terms of assembly, component of the spliceosome. Interacts with SNRNP200; the interaction is direct. Interacts with PRPF8.

The protein resides in the nucleus. Its subcellular location is the chromosome. It is found in the centromere. Functionally, plays a role in pre-mRNA splicing by promoting usage of the upstream 3'-splice site at alternative NAGNAG splice sites; these are sites featuring alternative acceptor motifs separated by only a few nucleotides. May also modulate exon inclusion events. PPlays a role in spliceosomal remodeling by displacing WBP4 from SNRNP200 and may act to inhibit SNRNP200 helicase activity. Binds U5 snRNA. Required for proper chromosome segregation. Not required for splicing of shelterin components. The chain is Splicing factor C9orf78 homolog from Mus musculus (Mouse).